The primary structure comprises 990 residues: Serine/threonine-protein kinase ATG1 (990 aa).

The Protein kinase domain occupies 15–334; sequence FVIENEIGKG…FDDFFASPVI (320 aa). Residues 21–29 and lysine 44 contribute to the ATP site; that span reads IGKGSFAVV. Aspartate 165 (proton acceptor) is an active-site residue. Positions 375–408 are enriched in polar residues; sequence VSSIEASTQQPGVQPPVSTATSPPALESRSTQEA. 5 disordered regions span residues 375-499, 529-566, 579-614, 750-784, and 970-990; these read VSSI…GGED, SRLGLASRRPSRLSRLSSGPLPSAPGASPPTAPPTILS, ASTGAFALPPGSRPSSFPRRASLSSSGSPSTRQGGQ, LSQELDSSTATSGISPSRNSVQGSARRVGSISSSS, and SPVGVDAEARPGVSRSRTESP. 2 stretches are compositionally biased toward low complexity: residues 529–554 and 587–613; these read SRLGLASRRPSRLSRLSSGPLPSAPG and PPGSRPSSFPRRASLSSSGSPSTRQGG. The span at 750-771 shows a compositional bias: polar residues; it reads LSQELDSSTATSGISPSRNSVQ. A compositionally biased stretch (low complexity) spans 772–784; that stretch reads GSARRVGSISSSS.

It belongs to the protein kinase superfamily. Ser/Thr protein kinase family. APG1/unc-51/ULK1 subfamily. Homodimer. Forms a ternary complex with ATG13 and ATG17.

Its subcellular location is the cytoplasm. The protein localises to the preautophagosomal structure membrane. It catalyses the reaction L-seryl-[protein] + ATP = O-phospho-L-seryl-[protein] + ADP + H(+). It carries out the reaction L-threonyl-[protein] + ATP = O-phospho-L-threonyl-[protein] + ADP + H(+). Functionally, serine/threonine protein kinase involved in the cytoplasm to vacuole transport (Cvt) and found to be essential in autophagy, where it is required for the formation of autophagosomes. Involved in the clearance of protein aggregates which cannot be efficiently cleared by the proteasome. Required for selective autophagic degradation of the nucleus (nucleophagy) as well as for mitophagy which contributes to regulate mitochondrial quantity and quality by eliminating the mitochondria to a basal level to fulfill cellular energy requirements and preventing excess ROS production. Also involved in endoplasmic reticulum-specific autophagic process, in selective removal of ER-associated degradation (ERAD) substrates. Plays a key role in ATG9 and ATG23 cycling through the pre-autophagosomal structure and is necessary to promote ATG18 binding to ATG9 through phosphorylation of ATG9. Catalyzes phosphorylation of ATG4, decreasing the interaction between ATG4 and ATG8 and impairing deconjugation of PE-conjugated forms of ATG8. Required for wild-type budding of haploid sporidia and for complete symptom development during pathogenic growth such as gall formation and teliospore production in ears of mature maize. This is Serine/threonine-protein kinase ATG1 from Mycosarcoma maydis (Corn smut fungus).